Consider the following 466-residue polypeptide: Coagulation factor IX (466 aa).

The first 25 residues, 1 to 25 (MRCLNMIMAEPPGLITICLLGYLLG), serve as a signal peptide directing secretion. A propeptide spanning residues 26 to 46 (ADCTVFLDHEDATKVLSRPKR) is cleaved from the precursor. The Ca(2+) site is built by Tyr-47, Asn-48, Glu-53, Glu-54, Glu-61, Glu-63, Glu-66, Glu-67, Glu-72, Glu-73, and Glu-76. One can recognise a Gla domain in the interval 47–92 (YNSGKLEEFVQGNLERECMEEKCSFEEAREVFENTEKTTEFWKQYV). Residues Glu-53, Glu-54, Glu-61, Glu-63, Glu-66, Glu-67, Glu-72, Glu-73, Glu-76, Glu-79, and Glu-82 each carry the 4-carboxyglutamate modification. Glu-61 contributes to the Mg(2+) binding site. Cys-64 and Cys-69 form a disulfide bridge. Residue Glu-66 participates in Mg(2+) binding. Residue Glu-72 coordinates Mg(2+). Glu-76 serves as a coordination point for Mg(2+). Glu-82 serves as a coordination point for Ca(2+). Position 82 (Glu-82) interacts with Mg(2+). The O-linked (GalNAc...) threonine glycan is linked to Thr-85. Ca(2+)-binding residues include Glu-86, Asp-93, Gly-94, and Gln-96. Glu-86 is subject to 4-carboxyglutamate. Glu-86 contributes to the Mg(2+) binding site. The 37-residue stretch at 93-129 (DGDQCESNPCLNGGICKDDINSYECWCQTGFEGKNCE) folds into the EGF-like 1; calcium-binding domain. Intrachain disulfides connect Cys-97/Cys-108, Cys-102/Cys-117, Cys-119/Cys-128, Cys-134/Cys-145, Cys-141/Cys-155, Cys-157/Cys-170, Cys-178/Cys-340, Cys-257/Cys-273, Cys-387/Cys-401, and Cys-412/Cys-440. Ser-99 carries O-linked (Glc...) serine glycosylation. Asp-110 and Asp-111 together coordinate Ca(2+). Position 110 is a (3R)-3-hydroxyaspartate (Asp-110). Ser-114 carries the post-translational modification Phosphoserine. The region spanning 130 to 171 (LDVTCNIKNGRCKQFCKLDADNKVVCSCTTGYQLAEDQKSCE) is the EGF-like 2 domain. The propeptide at 193 to 231 (AETLFLNMDYENSTTDYENSAEAEKNVDNVTQPLNDLTR) is activation peptide. Tyr-202 is subject to Sulfotyrosine. Ser-205 carries the phosphoserine modification. Thr-206 carries the phosphothreonine; alternate modification. An O-linked (GalNAc...) threonine; alternate glycan is attached at Thr-206. Asn-221 is a glycosylation site (N-linked (GlcNAc...) asparagine). 2 O-linked (GalNAc...) threonine glycosylation sites follow: Thr-223 and Thr-230. The Peptidase S1 domain occupies 232 to 464 (IVGGKTAKPG…YVNWIKEKTK (233 aa)). Residue His-272 is the Charge relay system of the active site. Residues Glu-286, Asn-288, Glu-291, Glu-293, and Glu-296 each contribute to the Ca(2+) site. Asp-320 serves as the catalytic Charge relay system. Ser-416 functions as the Charge relay system in the catalytic mechanism.

Belongs to the peptidase S1 family. In terms of assembly, heterodimer of a light chain and a heavy chain; disulfide-linked. Interacts (inactive and activated) with F11 (activated) in calcium-dependent manner. Interacts with SERPINC1. The iron and 2-oxoglutarate dependent 3-hydroxylation of aspartate and asparagine is (R) stereospecific within EGF domains. In terms of processing, activated by factor XIa, which excises the activation peptide. The propeptide can also be removed by snake venom protease. Activated by coagulation factor VIIa-tissue factor (F7-F3) complex in calcium-dependent manner. Post-translationally, predominantly O-glucosylated at Ser-99 by POGLUT1 in vitro.

It is found in the secreted. The catalysed reaction is Selective cleavage of Arg-|-Ile bond in factor X to form factor Xa.. In terms of biological role, factor IX is a vitamin K-dependent plasma protein that participates in the intrinsic pathway of blood coagulation by converting factor X to its active form in the presence of Ca(2+) ions, phospholipids, and factor VIIIa. The polypeptide is Coagulation factor IX (F9) (Felis catus (Cat)).